Here is a 100-residue protein sequence, read N- to C-terminus: Urease subunit gamma (100 aa).

The protein belongs to the urease gamma subunit family. Heterotrimer of UreA (gamma), UreB (beta) and UreC (alpha) subunits. Three heterotrimers associate to form the active enzyme.

The protein resides in the cytoplasm. It catalyses the reaction urea + 2 H2O + H(+) = hydrogencarbonate + 2 NH4(+). It functions in the pathway nitrogen metabolism; urea degradation; CO(2) and NH(3) from urea (urease route): step 1/1. This Acinetobacter baumannii (strain SDF) protein is Urease subunit gamma.